Reading from the N-terminus, the 263-residue chain is uncharacterized protein (263 aa).

This sequence belongs to the AtsA family.

It localises to the plastid. The protein resides in the chloroplast. This is an uncharacterized protein from Pyropia yezoensis (Susabi-nori).